We begin with the raw amino-acid sequence, 232 residues long: MGQKVNPTGIRLGIVKDHRSVWYAERGAYADKLNNDLEVRRFLEQRLKNASVSDITIERPANNARITIHTARPGIVIGKKGEDVDRLRRDVSEMMGVPVHVNIEEVRKPELDAQLVAQNVCGQLERRVMFRRAMKRAVQNAMRLGAGGIKIQLSGRLGGAEIARTEWYREGRVPLHTLRADIDYATYEAHTTYGVIGVKVWVFKGEILGGIEEVRAKQKQAQAPAPKKKGSR.

In terms of domain architecture, KH type-2 spans 39–107 (VRRFLEQRLK…PVHVNIEEVR (69 aa)).

The protein belongs to the universal ribosomal protein uS3 family. In terms of assembly, part of the 30S ribosomal subunit. Forms a tight complex with proteins S10 and S14.

Its function is as follows. Binds the lower part of the 30S subunit head. Binds mRNA in the 70S ribosome, positioning it for translation. In Chromohalobacter salexigens (strain ATCC BAA-138 / DSM 3043 / CIP 106854 / NCIMB 13768 / 1H11), this protein is Small ribosomal subunit protein uS3.